We begin with the raw amino-acid sequence, 137 residues long: Small ribosomal subunit protein uS9c (137 aa).

This sequence belongs to the universal ribosomal protein uS9 family.

It localises to the plastid. The protein localises to the chloroplast. This chain is Small ribosomal subunit protein uS9c (rps9), found in Gracilaria tenuistipitata var. liui (Red alga).